We begin with the raw amino-acid sequence, 121 residues long: Large ribosomal subunit protein bL19 (121 aa).

It belongs to the bacterial ribosomal protein bL19 family.

This protein is located at the 30S-50S ribosomal subunit interface and may play a role in the structure and function of the aminoacyl-tRNA binding site. The chain is Large ribosomal subunit protein bL19 from Borrelia garinii subsp. bavariensis (strain ATCC BAA-2496 / DSM 23469 / PBi) (Borreliella bavariensis).